Here is a 291-residue protein sequence, read N- to C-terminus: Lys-63-specific deubiquitinase BRCC36 (291 aa).

Alanine 2 bears the N-acetylalanine mark. In terms of domain architecture, MPN spans 12 to 179; it reads VHLESDAFLV…YTCFQSVQAQ (168 aa). Residues histidine 122, histidine 124, and aspartate 135 each contribute to the Zn(2+) site. Positions 122–135 match the JAMM motif motif; that stretch reads HSHPHITVWPSHVD. Phosphoserine is present on serine 233.

It belongs to the peptidase M67A family. BRCC36 subfamily. As to quaternary structure, component of the ARISC complex, at least composed of UIMC1/RAP80, ABRAXAS1, BRCC3/BRCC36, BABAM2 and BABAM1/NBA1. Component of the BRCA1-A complex, at least composed of BRCA1, BARD1, UIMC1/RAP80, ABRAXAS1, BRCC3/BRCC36, BABAM2 and BABAM1/NBA1. In the BRCA1-A complex, interacts directly with ABRAXAS1 and BABAM2. Component of the BRISC complex, at least composed of ABRAXAS2, BRCC3/BRCC36, BABAM2 and BABAM1/NBA1. Identified in a complex with SHMT2 and the other subunits of the BRISC complex. In the BRISC complex, interacts directly with ABRAXAS2. Identified in a complex with ABRAXAS2 and NUMA1. The BRISC complex interacts with the CSN complex. Component of the BRCA1/BRCA2 containing complex (BRCC), which also contains BRCA1, BRCA2, BARD1, BABAM2 and RAD51. BRCC is a ubiquitin E3 ligase complex that enhances cellular survival following DNA damage. Interacts with BRCA1. Binds polyubiquitin. Interacts with PWWP2B. Interacts with HDAC1; this interaction is enhanced in the presence of PWWP2B. Zn(2+) serves as cofactor.

It localises to the nucleus. The protein resides in the cytoplasm. The protein localises to the cytoskeleton. It is found in the spindle pole. In terms of biological role, metalloprotease that specifically cleaves 'Lys-63'-linked polyubiquitin chains. Does not have activity toward 'Lys-48'-linked polyubiquitin chains. Component of the BRCA1-A complex, a complex that specifically recognizes 'Lys-63'-linked ubiquitinated histones H2A and H2AX at DNA lesions sites, leading to target the BRCA1-BARD1 heterodimer to sites of DNA damage at double-strand breaks (DSBs). In the BRCA1-A complex, it specifically removes 'Lys-63'-linked ubiquitin on histones H2A and H2AX, antagonizing the RNF8-dependent ubiquitination at double-strand breaks (DSBs). Catalytic subunit of the BRISC complex, a multiprotein complex that specifically cleaves 'Lys-63'-linked ubiquitin in various substrates. Mediates the specific 'Lys-63'-specific deubiquitination associated with the COP9 signalosome complex (CSN), via the interaction of the BRISC complex with the CSN complex. The BRISC complex is required for normal mitotic spindle assembly and microtubule attachment to kinetochores via its role in deubiquitinating NUMA1. Plays a role in interferon signaling via its role in the deubiquitination of the interferon receptor IFNAR1; deubiquitination increases IFNAR1 activity by enhancing its stability and cell surface expression. Acts as a regulator of the NLRP3 inflammasome by mediating deubiquitination of NLRP3, leading to NLRP3 inflammasome assembly. Down-regulates the response to bacterial lipopolysaccharide (LPS) via its role in IFNAR1 deubiquitination. Deubiquitinates HDAC1 and PWWP2B leading to their stabilization. The chain is Lys-63-specific deubiquitinase BRCC36 (Brcc3) from Rattus norvegicus (Rat).